A 222-amino-acid chain; its full sequence is Octanoyltransferase (222 aa).

In terms of domain architecture, BPL/LPL catalytic spans 35-214 (GTAPELIWLL…HLDGFLARLD (180 aa)). Residues 73–80 (RGGRYTYH), 145–147 (AIG), and 158–160 (GFS) each bind substrate. The active-site Acyl-thioester intermediate is Cys-176.

The protein belongs to the LipB family.

The protein localises to the cytoplasm. It catalyses the reaction octanoyl-[ACP] + L-lysyl-[protein] = N(6)-octanoyl-L-lysyl-[protein] + holo-[ACP] + H(+). It participates in protein modification; protein lipoylation via endogenous pathway; protein N(6)-(lipoyl)lysine from octanoyl-[acyl-carrier-protein]: step 1/2. Catalyzes the transfer of endogenously produced octanoic acid from octanoyl-acyl-carrier-protein onto the lipoyl domains of lipoate-dependent enzymes. Lipoyl-ACP can also act as a substrate although octanoyl-ACP is likely to be the physiological substrate. The sequence is that of Octanoyltransferase from Novosphingobium aromaticivorans (strain ATCC 700278 / DSM 12444 / CCUG 56034 / CIP 105152 / NBRC 16084 / F199).